The chain runs to 290 residues: Nucleotide-binding protein XfasM23_0667 (290 aa).

13-20 (GLSGSGKS) is an ATP binding site. Position 65–68 (65–68 (DIRS)) interacts with GTP.

The protein belongs to the RapZ-like family.

In terms of biological role, displays ATPase and GTPase activities. The polypeptide is Nucleotide-binding protein XfasM23_0667 (Xylella fastidiosa (strain M23)).